A 316-amino-acid chain; its full sequence is Transaldolase A (316 aa).

The Schiff-base intermediate with substrate role is filled by K131.

This sequence belongs to the transaldolase family. Type 1 subfamily. As to quaternary structure, homodimer.

It is found in the cytoplasm. It catalyses the reaction D-sedoheptulose 7-phosphate + D-glyceraldehyde 3-phosphate = D-erythrose 4-phosphate + beta-D-fructose 6-phosphate. Its pathway is carbohydrate degradation; pentose phosphate pathway; D-glyceraldehyde 3-phosphate and beta-D-fructose 6-phosphate from D-ribose 5-phosphate and D-xylulose 5-phosphate (non-oxidative stage): step 2/3. Its function is as follows. Transaldolase is important for the balance of metabolites in the pentose-phosphate pathway. The polypeptide is Transaldolase A (Salmonella typhimurium (strain LT2 / SGSC1412 / ATCC 700720)).